A 284-amino-acid polypeptide reads, in one-letter code: NH(3)-dependent NAD(+) synthetase (284 aa).

51–58 (GISGGIDS) provides a ligand contact to ATP. Residue aspartate 57 coordinates Mg(2+). Residue arginine 148 coordinates deamido-NAD(+). Threonine 168 contacts ATP. Residue glutamate 173 coordinates Mg(2+). Deamido-NAD(+) is bound by residues lysine 181 and aspartate 188. Residues lysine 197 and threonine 219 each coordinate ATP. 268 to 269 (HK) is a deamido-NAD(+) binding site.

Belongs to the NAD synthetase family. Homodimer.

The catalysed reaction is deamido-NAD(+) + NH4(+) + ATP = AMP + diphosphate + NAD(+) + H(+). Its pathway is cofactor biosynthesis; NAD(+) biosynthesis; NAD(+) from deamido-NAD(+) (ammonia route): step 1/1. Its function is as follows. Catalyzes the ATP-dependent amidation of deamido-NAD to form NAD. Uses ammonia as a nitrogen source. This chain is NH(3)-dependent NAD(+) synthetase, found in Burkholderia mallei (strain NCTC 10247).